The sequence spans 371 residues: Enoyl-[acyl-carrier-protein] reductase [NADH] 2, chloroplastic (371 aa).

The transit peptide at 1–67 directs the protein to the chloroplast; it reads MGASVTTGLQ…SLNHKRFAVR (67 aa). NAD(+) is bound by residues G87, Y94, 151-152, 198-199, and L248; these read DA and SL. Catalysis depends on proton acceptor residues Y250 and Y260. Residues K268 and 298-302 each bind NAD(+); that span reads LGSRA.

Belongs to the short-chain dehydrogenases/reductases (SDR) family. FabI subfamily. In terms of assembly, homotetramer.

The protein localises to the plastid. Its subcellular location is the chloroplast. It catalyses the reaction a 2,3-saturated acyl-[ACP] + NAD(+) = a (2E)-enoyl-[ACP] + NADH + H(+). It participates in lipid metabolism; fatty acid biosynthesis. In terms of biological role, catalyzes the NAD-dependent reduction of a carbon-carbon double bond in an enoyl moiety that is covalently linked to an acyl carrier protein (ACP). Catalyzes the last reduction step in the de novo synthesis cycle of fatty acids. Involved in the elongation cycle of fatty acids which are used in lipid metabolism. Required for normal plant growth. The polypeptide is Enoyl-[acyl-carrier-protein] reductase [NADH] 2, chloroplastic (Oryza sativa subsp. japonica (Rice)).